A 977-amino-acid chain; its full sequence is Alanine--tRNA ligase (977 aa).

The tract at residues 512–535 is disordered; sequence SQVDSKLQSSTPAGTGSYDSKQVS. Residues H618, H622, C720, and H724 each coordinate Zn(2+).

This sequence belongs to the class-II aminoacyl-tRNA synthetase family. Requires Zn(2+) as cofactor.

It is found in the cytoplasm. It catalyses the reaction tRNA(Ala) + L-alanine + ATP = L-alanyl-tRNA(Ala) + AMP + diphosphate. In terms of biological role, catalyzes the attachment of alanine to tRNA(Ala) in a two-step reaction: alanine is first activated by ATP to form Ala-AMP and then transferred to the acceptor end of tRNA(Ala). Also edits incorrectly charged Ser-tRNA(Ala) and Gly-tRNA(Ala) via its editing domain. The polypeptide is Alanine--tRNA ligase (Leptospira interrogans serogroup Icterohaemorrhagiae serovar Lai (strain 56601)).